Consider the following 446-residue polypeptide: MSNESFPETLENLLSTLQTKQQNAIQSEVIEWLHSFCETFHLKIHCHKQFIPSGEKKWAKIPTQETQENTQPHVQRVVLSRAQPLKVQESLLTTMCNGLVLDANTWTCLAVPPPAPFQQVTRQIQHYYRNNFYEVVPIQDGTLLTIYYWDDPEHGPSWCLASTHGYDVSNYCWIGDKTFAELVYELLQQHSTCDVTLEKKQTRGTRLFFNNLNRDYCYTIGIRHHNLQPLIYDPQNIWAIQTTNLKTLKTVYPEYHGYVGIPGIQSQVPELPQYELPYLIRSYKTAMNQAKNAIKNGKKDKGYFNYGYLLVSRAPAITKSISTVLLKSPLLVFLQKSVYQKKHNLTSSLRLEFIILQNYLMQHFRDNFIALFPQYISYYTKYQNMLNMIIHSIAIKDIDHPFAGTVVKKVLEDIENAENIIDHTTIQNYVHQSKYAMLYLSIISHF.

Belongs to the asfivirus M448R family.

It is found in the virion. This chain is Putative RNA-ligase, found in African swine fever virus (isolate Tick/Malawi/Lil 20-1/1983) (ASFV).